The following is a 223-amino-acid chain: AMSH-like ubiquitin thioesterase 2 (223 aa).

Positions 49-177 (VHISERLLED…YGIFKLTDPG (129 aa)) constitute an MPN domain. 7 residues coordinate Zn(2+): H127, H129, D140, H142, C185, H191, and H193. The JAMM motif signature appears at 127-140 (HTHPSQGCFMSSVD).

This sequence belongs to the peptidase M67C family. It depends on Zn(2+) as a cofactor.

In terms of biological role, zinc metalloprotease that cleaves 'Lys-48'- and 'Lys-63'-linked polyubiquitin chains. This is AMSH-like ubiquitin thioesterase 2 (AMSH2) from Arabidopsis thaliana (Mouse-ear cress).